Reading from the N-terminus, the 143-residue chain is Nucleoside diphosphate kinase (143 aa).

Residues lysine 11, phenylalanine 59, arginine 87, threonine 93, arginine 104, and asparagine 114 each contribute to the ATP site. Histidine 117 (pros-phosphohistidine intermediate) is an active-site residue.

Belongs to the NDK family. As to quaternary structure, homotetramer. Mg(2+) serves as cofactor.

The protein localises to the cytoplasm. The enzyme catalyses a 2'-deoxyribonucleoside 5'-diphosphate + ATP = a 2'-deoxyribonucleoside 5'-triphosphate + ADP. The catalysed reaction is a ribonucleoside 5'-diphosphate + ATP = a ribonucleoside 5'-triphosphate + ADP. Its function is as follows. Major role in the synthesis of nucleoside triphosphates other than ATP. The ATP gamma phosphate is transferred to the NDP beta phosphate via a ping-pong mechanism, using a phosphorylated active-site intermediate. The sequence is that of Nucleoside diphosphate kinase from Shewanella baltica (strain OS223).